A 412-amino-acid chain; its full sequence is Multidrug resistance protein MdtG (412 aa).

The next 10 helical transmembrane spans lie at 20–40 (LFVA…IMPF), 62–82 (LVFS…GGLA), 96–116 (LGMS…QFLI), 119–139 (ALLG…ATQI), 150–170 (TLST…GLLA), 177–197 (PVFF…LYFI), 225–245 (VLCL…IAPI), 260–280 (LAFI…MSAP), 294–314 (ILVA…LVQT), and 382–402 (TVFF…YWCL).

The protein belongs to the major facilitator superfamily. DHA1 family. MdtG (TC 2.A.1.2.20) subfamily.

It is found in the cell inner membrane. In Rahnella sp. (strain Y9602), this protein is Multidrug resistance protein MdtG.